The primary structure comprises 92 residues: Large ribosomal subunit protein uL24 (92 aa).

It belongs to the universal ribosomal protein uL24 family. Part of the 50S ribosomal subunit.

In terms of biological role, one of two assembly initiator proteins, it binds directly to the 5'-end of the 23S rRNA, where it nucleates assembly of the 50S subunit. Its function is as follows. One of the proteins that surrounds the polypeptide exit tunnel on the outside of the subunit. This Opitutus terrae (strain DSM 11246 / JCM 15787 / PB90-1) protein is Large ribosomal subunit protein uL24.